A 373-amino-acid polypeptide reads, in one-letter code: Queuine tRNA-ribosyltransferase accessory subunit 2 (373 aa).

Residues cysteine 320, cysteine 322, cysteine 325, and histidine 351 each coordinate Zn(2+).

It belongs to the queuine tRNA-ribosyltransferase family. QTRT2 subfamily. In terms of assembly, heterodimer of a catalytic subunit and an accessory subunit. Zn(2+) serves as cofactor.

It localises to the cytoplasm. Non-catalytic subunit of the queuine tRNA-ribosyltransferase (TGT) that catalyzes the base-exchange of a guanine (G) residue with queuine (Q) at position 34 (anticodon wobble position) in tRNAs with GU(N) anticodons (tRNA-Asp, -Asn, -His and -Tyr), resulting in the hypermodified nucleoside queuosine (7-(((4,5-cis-dihydroxy-2-cyclopenten-1-yl)amino)methyl)-7-deazaguanosine). This Caenorhabditis elegans protein is Queuine tRNA-ribosyltransferase accessory subunit 2.